Reading from the N-terminus, the 117-residue chain is Hydrogenase maturation factor HypA (117 aa).

His2 contacts Ni(2+). Zn(2+)-binding residues include Cys73, Cys76, Cys89, and Cys92.

This sequence belongs to the HypA/HybF family.

Functionally, involved in the maturation of [NiFe] hydrogenases. Required for nickel insertion into the metal center of the hydrogenase. This Pelodictyon phaeoclathratiforme (strain DSM 5477 / BU-1) protein is Hydrogenase maturation factor HypA.